Consider the following 152-residue polypeptide: Large ribosomal subunit protein uL15 (152 aa).

The interval 1 to 55 (MRLHELKPNEGATHKKKRVGRGIGSGHGKTSTKGQKGQTSRSGDSKLPARFEGGQ) is disordered. Residues 28–42 (GKTSTKGQKGQTSRS) are compositionally biased toward polar residues.

This sequence belongs to the universal ribosomal protein uL15 family. As to quaternary structure, part of the 50S ribosomal subunit.

Functionally, binds to the 23S rRNA. The polypeptide is Large ribosomal subunit protein uL15 (Sulfurihydrogenibium sp. (strain YO3AOP1)).